Reading from the N-terminus, the 220-residue chain is PRA1 family protein B4 (220 aa).

A disordered region spans residues 1–27; it reads MASSAPPVLPISNPQTVPSAAPSSVES. Polar residues predominate over residues 12 to 27; sequence SNPQTVPSAAPSSVES. 5 consecutive transmembrane segments (helical) span residues 83-103, 105-125, 146-166, 170-190, and 196-216; these read YSYFKVNYLTVATAIVGFSLV, HPFSLVFLLCLLASWLFLYLF, GCLILFSIFVIFLTDVGSVLV, MIGVALICAHGAFRAPEDLFL, and AATGFLSFLGGAASSAAPAVI.

It belongs to the PRA1 family. Interacts with PRA1B1, PRA1B2, PRA1B3, PRA1B5, PRA1B6 and PRA1E. In terms of tissue distribution, expressed in roots, lateral roots, lateral root caps, stomata and trichomes.

Its subcellular location is the endosome membrane. In terms of biological role, may be involved in both secretory and endocytic intracellular trafficking in the endosomal/prevacuolar compartments. This Arabidopsis thaliana (Mouse-ear cress) protein is PRA1 family protein B4 (PRA1B4).